The following is a 37-amino-acid chain: Lambda-hexatoxin-Hv1c (37 aa).

4 disulfides stabilise this stretch: Cys-3/Cys-17, Cys-10/Cys-22, Cys-13/Cys-14, and Cys-16/Cys-32.

The protein belongs to the neurotoxin 11 (kappa toxin) family. As to expression, expressed by the venom gland.

It localises to the secreted. Functionally, this excitatory toxin inhibits insect calcium-activated potassium (KCa) channels (Slo-type). Pan-neuronal expression in Drosophila is lethal but flies engineered to express the toxin only in clock neurons have defects in circadian rhythm but a normal lifespan. The protein is Lambda-hexatoxin-Hv1c of Hadronyche versuta (Blue mountains funnel-web spider).